The primary structure comprises 428 residues: Histidinol dehydrogenase (428 aa).

The NAD(+) site is built by Y127, Q185, and N208. Substrate-binding residues include S234, Q256, and H259. Residues Q256 and H259 each contribute to the Zn(2+) site. Catalysis depends on proton acceptor residues E323 and H324. Substrate contacts are provided by H324, D357, E411, and H416. Residue D357 coordinates Zn(2+). H416 lines the Zn(2+) pocket.

Belongs to the histidinol dehydrogenase family. Zn(2+) serves as cofactor.

It carries out the reaction L-histidinol + 2 NAD(+) + H2O = L-histidine + 2 NADH + 3 H(+). It participates in amino-acid biosynthesis; L-histidine biosynthesis; L-histidine from 5-phospho-alpha-D-ribose 1-diphosphate: step 9/9. Functionally, catalyzes the sequential NAD-dependent oxidations of L-histidinol to L-histidinaldehyde and then to L-histidine. In Mannheimia succiniciproducens (strain KCTC 0769BP / MBEL55E), this protein is Histidinol dehydrogenase.